Consider the following 192-residue polypeptide: MGQHEVTARLSELTNTFIERHHSSSRQRPCIPLNEDTRYMLDSPCVEHVDEEAGVFYWTPRPHMDFTLFDGLEQGLEVAIHPSITAFYGSYWSDGLWCSSPFGEISLIQLWNEDDMETLRENLLGHAFQKSKRRQGLTFFIGLTADDRIVTVDNHSGEVYLEEAGRPPQRTLAASLGELLRELEPTLTPYTG.

This sequence belongs to the Syd family.

The protein resides in the cell inner membrane. In terms of biological role, interacts with the SecY protein in vivo. May bind preferentially to an uncomplexed state of SecY, thus functioning either as a chelating agent for excess SecY in the cell or as a regulatory factor that negatively controls the translocase function. The protein is Protein Syd of Hahella chejuensis (strain KCTC 2396).